The following is a 982-amino-acid chain: MDRKSWPWKKKSSEKTATVTEVVDQENGKKPSYIQISFDQYTNLNGLKDEVKSYEEKVTKLEDQIKDLDLKLSTANADIVAKEVLVKQHSKVAEEAVTGWEKAEAEASALKTHLETITLAKLTVEDRAAHLDGALKECMRQIRSLKEENEQKLHDVIATKTNQMDNLRAEFESRIGEYEEELLRCGAENDALSRSLQERSNMLMRISEEKSQAESEIEHLKNNIESCEREINTLKYETHVITKELEIRNEEKNMSMRSAEAANKQHLEGVKKIAKLEAECQRLRTLVRKKLPGPAALAQMKMEVESLGFGDHRQDHRQRRSPVRPSSPLMSPMSHMSQVSEFSLDNMQKFHKENDLLTERLLAMEEETKMLKEALAKRNSELQVSRNLCAKTANRLQTLEAQMMSKSPTKRGFEMPAEIFSRQNASNPPSMASMSEDGNEDARSVAGSLMSELSQSNKDKANAKIKKTESANQLELMDDFLEMEKLACLPNGSNANGSTDHSSADSDAEIPPATQLKKRISNVLQSLPKDAAFEKILAEIQCAVKDAGVKLPSKSHGANLNGLTEEKVIAMSNETTEEKVTIVEVITQELSDALSQIYQFVTYLSKEATACSENRTFSQKVQEFSTTFEGVLGKEKTLVDFLFDLSRVLVEASELKIDVLGFHTSTVEIHSPDCIDKVALPENKALQKDSSGEHYQNGCSQSSDSEIPDDCNGTSGYEPKLATCKFTTEEFEGLKLEKEKAESNLASCEADLEATKTKLQETEKLLAEVKSDLESAQKSNGMGETQLKCMVESYRSLETRSSELEIELTSLKGKIENLEDELHDEKENHREALAKCQELEEQLQRNNQNCPNCSVIEDDPKSKQDNELAAAAEKLAECQETILLLGKQLKSMCPQTEQVASSPSQEQQALNPEEEEYATSTNPQDSKLSSPSDKDTPSMNTMKSPVASKHRHTKSNSSSSSSGLTPEKHSRGFSRFFSTKAK.

Coiled coils occupy residues 39 to 83 (DQYT…VAKE) and 125 to 291 (EDRA…RKKL). Residues 311-333 (DHRQDHRQRRSPVRPSSPLMSPM) form a disordered region. Positions 323-333 (VRPSSPLMSPM) are enriched in low complexity. The stretch at 345 to 401 (DNMQKFHKENDLLTERLLAMEEETKMLKEALAKRNSELQVSRNLCAKTANRLQTLEA) forms a coiled coil. Over residues 423–433 (QNASNPPSMAS) the composition is skewed to polar residues. 2 disordered regions span residues 423 to 466 (QNAS…AKIK) and 687 to 711 (QKDS…PDDC). A coiled-coil region spans residues 452–475 (ELSQSNKDKANAKIKKTESANQLE). The segment covering 457–466 (NKDKANAKIK) has biased composition (basic and acidic residues). Over residues 693–705 (EHYQNGCSQSSDS) the composition is skewed to polar residues. A coiled-coil region spans residues 722-885 (ATCKFTTEEF…AECQETILLL (164 aa)). 2 stretches are compositionally biased toward polar residues: residues 896-910 (TEQV…QQAL) and 918-943 (ATST…NTMK). Positions 896–982 (TEQVASSPSQ…FSRFFSTKAK (87 aa)) are disordered.

It belongs to the FPP family. In terms of assembly, interacts with WPP/MAF proteins.

This chain is Filament-like plant protein 4 (FPP4), found in Arabidopsis thaliana (Mouse-ear cress).